We begin with the raw amino-acid sequence, 101 residues long: Protein Tat (101 aa).

The interval methionine 1–asparagine 24 is interaction with human CREBBP. Residues methionine 1 to glycine 48 form a transactivation region. Zn(2+) is bound by residues cysteine 22, cysteine 25, and cysteine 27. Residues cysteine 22–cysteine 37 are cysteine-rich. At lysine 28 the chain carries N6-acetyllysine; by host PCAF. Zn(2+) contacts are provided by cysteine 30, histidine 33, cysteine 34, and cysteine 37. The interval phenylalanine 38–glycine 48 is core. Positions glycine 48–aspartate 101 are disordered. The Nuclear localization signal, RNA-binding (TAR), and protein transduction signature appears at arginine 49–serine 57. Residues arginine 49–glutamate 86 are interaction with the host capping enzyme RNGTT. An N6-acetyllysine; by host EP300 and GCN5L2 mark is found at lysine 50 and lysine 51. Asymmetric dimethylarginine; by host PRMT6 is present on residues arginine 52 and arginine 53. Residues threonine 82–aspartate 101 are compositionally biased toward basic and acidic residues.

The protein belongs to the lentiviruses Tat family. As to quaternary structure, interacts with host CCNT1. Associates with the P-TEFb complex composed at least of Tat, P-TEFb (CDK9 and CCNT1), TAR RNA, RNA Pol II. Recruits the HATs CREBBP, TAF1/TFIID, EP300, PCAF and GCN5L2. Interacts with host KAT5/Tip60; this interaction targets the latter to degradation. Interacts with the host deacetylase SIRT1. Interacts with host capping enzyme RNGTT; this interaction stimulates RNGTT. Binds to host KDR, and to the host integrins ITGAV/ITGB3 and ITGA5/ITGB1. Interacts with host KPNB1/importin beta-1 without previous binding to KPNA1/importin alpha-1. Interacts with EIF2AK2. Interacts with host nucleosome assembly protein NAP1L1; this interaction may be required for the transport of Tat within the nucleus, since the two proteins interact at the nuclear rim. Interacts with host C1QBP/SF2P32; this interaction involves lysine-acetylated Tat. Interacts with the host chemokine receptors CCR2, CCR3 and CXCR4. Interacts with host DPP4/CD26; this interaction may trigger an anti-proliferative effect. Interacts with host LDLR. Interacts with the host extracellular matrix metalloproteinase MMP1. Interacts with host PRMT6; this interaction mediates Tat's methylation. Interacts with, and is ubiquitinated by MDM2/Hdm2. Interacts with host PSMC3 and HTATIP2. Interacts with STAB1; this interaction may overcome SATB1-mediated repression of IL2 and IL2RA (interleukin) in T cells by binding to the same domain than HDAC1. Interacts (when acetylated) with human CDK13, thereby increasing HIV-1 mRNA splicing and promoting the production of the doubly spliced HIV-1 protein Nef. Interacts with host TBP; this interaction modulates the activity of transcriptional pre-initiation complex. Interacts with host RELA. Interacts with host PLSCR1; this interaction negatively regulates Tat transactivation activity by altering its subcellular distribution. In terms of processing, asymmetrical arginine methylation by host PRMT6 seems to diminish the transactivation capacity of Tat and affects the interaction with host CCNT1. Post-translationally, acetylation by EP300, CREBBP, GCN5L2/GCN5 and PCAF regulates the transactivation activity of Tat. EP300-mediated acetylation of Lys-50 promotes dissociation of Tat from the TAR RNA through the competitive binding to PCAF's bromodomain. In addition, the non-acetylated Tat's N-terminus can also interact with PCAF. PCAF-mediated acetylation of Lys-28 enhances Tat's binding to CCNT1. Lys-50 is deacetylated by SIRT1. Polyubiquitination by host MDM2 does not target Tat to degradation, but activates its transactivation function and fosters interaction with CCNT1 and TAR RNA. In terms of processing, phosphorylated by EIF2AK2 on serine and threonine residues adjacent to the basic region important for TAR RNA binding and function. Phosphorylation of Tat by EIF2AK2 is dependent on the prior activation of EIF2AK2 by dsRNA.

The protein localises to the host nucleus. It localises to the host nucleolus. Its subcellular location is the host cytoplasm. The protein resides in the secreted. In terms of biological role, transcriptional activator that increases RNA Pol II processivity, thereby increasing the level of full-length viral transcripts. Recognizes a hairpin structure at the 5'-LTR of the nascent viral mRNAs referred to as the transactivation responsive RNA element (TAR) and recruits the cyclin T1-CDK9 complex (P-TEFb complex) that will in turn hyperphosphorylate the RNA polymerase II to allow efficient elongation. The CDK9 component of P-TEFb and other Tat-activated kinases hyperphosphorylate the C-terminus of RNA Pol II that becomes stabilized and much more processive. Other factors such as HTATSF1/Tat-SF1, SUPT5H/SPT5, and HTATIP2 are also important for Tat's function. Besides its effect on RNA Pol II processivity, Tat induces chromatin remodeling of proviral genes by recruiting the histone acetyltransferases (HATs) CREBBP, EP300 and PCAF to the chromatin. This also contributes to the increase in proviral transcription rate, especially when the provirus integrates in transcriptionally silent region of the host genome. To ensure maximal activation of the LTR, Tat mediates nuclear translocation of NF-kappa-B by interacting with host RELA. Through its interaction with host TBP, Tat may also modulate transcription initiation. Tat can reactivate a latently infected cell by penetrating in it and transactivating its LTR promoter. In the cytoplasm, Tat is thought to act as a translational activator of HIV-1 mRNAs. Its function is as follows. Extracellular circulating Tat can be endocytosed by surrounding uninfected cells via the binding to several surface receptors such as CD26, CXCR4, heparan sulfate proteoglycans (HSPG) or LDLR. Neurons are rarely infected, but they internalize Tat via their LDLR. Through its interaction with nuclear HATs, Tat is potentially able to control the acetylation-dependent cellular gene expression. Modulates the expression of many cellular genes involved in cell survival, proliferation or in coding for cytokines or cytokine receptors. Tat plays a role in T-cell and neurons apoptosis. Tat induced neurotoxicity and apoptosis probably contribute to neuroAIDS. Circulating Tat also acts as a chemokine-like and/or growth factor-like molecule that binds to specific receptors on the surface of the cells, affecting many cellular pathways. In the vascular system, Tat binds to ITGAV/ITGB3 and ITGA5/ITGB1 integrins dimers at the surface of endothelial cells and competes with bFGF for heparin-binding sites, leading to an excess of soluble bFGF. The sequence is that of Protein Tat from Human immunodeficiency virus type 1 group M subtype J (isolate SE9173) (HIV-1).